Consider the following 162-residue polypeptide: 2-C-methyl-D-erythritol 2,4-cyclodiphosphate synthase (162 aa).

2 residues coordinate a divalent metal cation: Asp-8 and His-10. 4-CDP-2-C-methyl-D-erythritol 2-phosphate is bound by residues 8 to 10 and 36 to 37; these read DVH and HS. His-44 lines the a divalent metal cation pocket. 4-CDP-2-C-methyl-D-erythritol 2-phosphate contacts are provided by residues 58–60, 63–67, 102–108, 134–137, Phe-141, and Arg-144; these read DIG, FPDTD, AQAPKMA, and TTTE.

Belongs to the IspF family. Homotrimer. A divalent metal cation is required as a cofactor.

It catalyses the reaction 4-CDP-2-C-methyl-D-erythritol 2-phosphate = 2-C-methyl-D-erythritol 2,4-cyclic diphosphate + CMP. The protein operates within isoprenoid biosynthesis; isopentenyl diphosphate biosynthesis via DXP pathway; isopentenyl diphosphate from 1-deoxy-D-xylulose 5-phosphate: step 4/6. Involved in the biosynthesis of isopentenyl diphosphate (IPP) and dimethylallyl diphosphate (DMAPP), two major building blocks of isoprenoid compounds. Catalyzes the conversion of 4-diphosphocytidyl-2-C-methyl-D-erythritol 2-phosphate (CDP-ME2P) to 2-C-methyl-D-erythritol 2,4-cyclodiphosphate (ME-CPP) with a corresponding release of cytidine 5-monophosphate (CMP). In Yersinia pseudotuberculosis serotype O:1b (strain IP 31758), this protein is 2-C-methyl-D-erythritol 2,4-cyclodiphosphate synthase.